Here is a 20-residue protein sequence, read N- to C-terminus: Cytochrome c oxidase subunit 5A-1, mitochondrial (20 aa).

It belongs to the cytochrome c oxidase subunit 5A family. Component of the cytochrome c oxidase (complex IV, CIV), a multisubunit enzyme composed of 14 subunits. The complex is composed of a catalytic core of 3 subunits MT-CO1, MT-CO2 and MT-CO3, encoded in the mitochondrial DNA, and 11 supernumerary subunits COX4I, COX5A, COX5B, COX6A, COX6B, COX6C, COX7A, COX7B, COX7C, COX8 and NDUFA4, which are encoded in the nuclear genome. The complex exists as a monomer or a dimer and forms supercomplexes (SCs) in the inner mitochondrial membrane with NADH-ubiquinone oxidoreductase (complex I, CI) and ubiquinol-cytochrome c oxidoreductase (cytochrome b-c1 complex, complex III, CIII), resulting in different assemblies (supercomplex SCI(1)III(2)IV(1) and megacomplex MCI(2)III(2)IV(2)). Interacts with AFG1L. Interacts with RAB5IF.

It localises to the mitochondrion inner membrane. It participates in energy metabolism; oxidative phosphorylation. In terms of biological role, component of the cytochrome c oxidase, the last enzyme in the mitochondrial electron transport chain which drives oxidative phosphorylation. The respiratory chain contains 3 multisubunit complexes succinate dehydrogenase (complex II, CII), ubiquinol-cytochrome c oxidoreductase (cytochrome b-c1 complex, complex III, CIII) and cytochrome c oxidase (complex IV, CIV), that cooperate to transfer electrons derived from NADH and succinate to molecular oxygen, creating an electrochemical gradient over the inner membrane that drives transmembrane transport and the ATP synthase. Cytochrome c oxidase is the component of the respiratory chain that catalyzes the reduction of oxygen to water. Electrons originating from reduced cytochrome c in the intermembrane space (IMS) are transferred via the dinuclear copper A center (CU(A)) of subunit 2 and heme A of subunit 1 to the active site in subunit 1, a binuclear center (BNC) formed by heme A3 and copper B (CU(B)). The BNC reduces molecular oxygen to 2 water molecules using 4 electrons from cytochrome c in the IMS and 4 protons from the mitochondrial matrix. The chain is Cytochrome c oxidase subunit 5A-1, mitochondrial from Thunnus obesus (Bigeye tuna).